The primary structure comprises 989 residues: MTSKESKPSRTTWRGMEPPLRETWNQVLQELVKRQQQEEEEQQGLVSGKKKSWVSIDLLGTEGKDIKKVNIWEPCEKWFAQVIWGVLWVLQIVLWGCLMWEMRKGNQCQAEEVIALVSDPGGFQRVQHVETVPVTCVTKNFTQWGCQPEGAYPDPELEYRNISREILEEVYKQDWPWNTYHWPLWQMENMRQWMKENEKEYKERTNKTKEDIDDLVAGRIRGRFCVPYPYALLRCEEWCWYPESINQETGHAEKIKINCTKAKAVSCTEKMPLAAVQRVYWEKEDEESMKFLNIKACNISLRCQDEGKSPGGCVQGYPIPKGAEIIPEAMKYLRGKKSRYGGIKDKNGELKLPLSVRVWVRMANLSGWVNGTPPYWSARVNGSTGINGTRWYGVGTLHHLGYNISSNPERGICDFTGELWIGGDKFPYYYKPSWNCSQNWTGHPVWQVFRYLDMTEHMTSRCIQRPERHNITVGNGTITGNCSVTNWDGCNCTRSGNHLYNSTSGGLLVIICRQNSTITGIMGTNTNWTTMWNIYQNCSKCNNSSLDRTGNGTLGTVNDLKCSLPHRNESNKWTCAARRKGSRRDSLYIAGRDFWGRVKAKYSCESNLGGLDSMMHQQMLLQRYQVIRVRAYTYGVVEMPQSYMEAQGENRRSRRNLQRKKRGIGLVIVLAIMAIIAAAGAGLGVANAVQQSYTRTAVQSLANATAAQQEVLEASYAMVQHIAKGIRILEARVARVEALVDRMMVYHELDCWHYQHYCVTSTRSEVANYVNWTRFKDNCTWQQWEEEIEQHEGNLSLLLREAALQVHIAQRDARRIPDAWKAIQEAFNWSSWFSWLKYIPWIIMGIVGLICFRILMCVISMCLQAYKQVKQIRYTQVTVVIEAPVELEEKQKRNGDGTNGCASLERERRTSHRSFIQIWRATWWAWKTSPWRHSWRTMPYITLLPMLVIWQWMEENGWNGENQHKKKKERVDCQDREQMPTLENDYVEL.

Positions 1 to 106 (MTSKESKPSR…CLMWEMRKGN (106 aa)) are cleaved as a signal peptide. At 107–838 (QCQAEEVIAL…WSSWFSWLKY (732 aa)) the chain is on the extracellular side. N-linked (GlcNAc...) asparagine; by host glycosylation is found at asparagine 140, asparagine 161, asparagine 206, asparagine 258, asparagine 298, asparagine 364, asparagine 381, asparagine 387, asparagine 403, asparagine 435, asparagine 439, asparagine 470, asparagine 475, asparagine 481, asparagine 491, asparagine 501, asparagine 515, asparagine 527, asparagine 537, asparagine 542, asparagine 543, asparagine 551, and asparagine 568. The segment at 663–683 (GIGLVIVLAIMAIIAAAGAGL) is fusion peptide. The stretch at 695 to 745 (RTAVQSLANATAAQQEVLEASYAMVQHIAKGIRILEARVARVEALVDRMMV) forms a coiled coil. N-linked (GlcNAc...) asparagine; by host glycosylation is present at asparagine 703. The tract at residues 729-745 (LEARVARVEALVDRMMV) is immunosuppression. 4 N-linked (GlcNAc...) asparagine; by host glycosylation sites follow: asparagine 771, asparagine 778, asparagine 794, and asparagine 828. Positions 786–821 (EEIEQHEGNLSLLLREAALQVHIAQRDARRIPDAWK) form a coiled coil. A helical transmembrane segment spans residues 839-859 (IPWIIMGIVGLICFRILMCVI). The Cytoplasmic segment spans residues 860–989 (SMCLQAYKQV…PTLENDYVEL (130 aa)). The S-palmitoyl cysteine; by host moiety is linked to residue cysteine 862.

The mature envelope protein (Env) consists of a trimer of SU-TM heterodimers attached by noncovalent interactions or by a labile interchain disulfide bond. Specific enzymatic cleavages in vivo yield mature proteins. Envelope glycoproteins are synthesized as an inactive precursor that is N-glycosylated and processed likely by host cell furin or by a furin-like protease in the Golgi to yield the mature SU and TM proteins. The cleavage site between SU and TM requires the minimal sequence [KR]-X-[KR]-R. Post-translationally, the transmembrane protein is palmitoylated.

The protein localises to the virion membrane. The protein resides in the host cell membrane. The surface protein (SU) attaches the virus to the host cell by binding to its receptor. This interaction triggers the refolding of the transmembrane protein (TM) and is thought to activate its fusogenic potential by unmasking its fusion peptide. Fusion occurs at the host cell plasma membrane. Its function is as follows. The transmembrane protein (TM) acts as a class I viral fusion protein. Under the current model, the protein has at least 3 conformational states: pre-fusion native state, pre-hairpin intermediate state, and post-fusion hairpin state. During viral and target cell membrane fusion, the coiled coil regions (heptad repeats) assume a trimer-of-hairpins structure, positioning the fusion peptide in close proximity to the C-terminal region of the ectodomain. The formation of this structure appears to drive apposition and subsequent fusion of viral and target cell membranes. Membranes fusion leads to delivery of the nucleocapsid into the cytoplasm. This Ovis aries (Sheep) protein is Envelope glycoprotein gp160 (env).